The chain runs to 446 residues: Branched-chain amino acid permease BrnQ (446 aa).

A run of 12 helical transmembrane segments spans residues 13 to 33 (ISSM…PAYL), 41 to 61 (LWIS…LAIA), 81 to 101 (KYSY…FAIP), 120 to 140 (MAKS…MLFF), 154 to 174 (FLTP…LLHP), 196 to 216 (VLAG…IIVI), 237 to 257 (TGVL…LVGA), 285 to 305 (GAVI…IGLI), 325 to 345 (WAII…TTII), 347 to 367 (FSLP…LLAL), 381 to 401 (IMTA…LPAG), and 421 to 441 (GLGW…KGVI).

The protein belongs to the branched chain amino acid transporter family.

The protein localises to the cell membrane. Leucine uptake is inhibited by the proton ionophore carbonyl cyanide m-chlorophenylhydrazone (CCCP). Its function is as follows. Branched chain amino acid transport system which is involved in the uptake of leucine, valine and isoleucine. The proton motive force is probably the driving force for transport. The sequence is that of Branched-chain amino acid permease BrnQ from Lactobacillus delbrueckii subsp. lactis.